Consider the following 475-residue polypeptide: Chromosomal replication initiator protein DnaA (475 aa).

Residues 1–71 form a domain I, interacts with DnaA modulators region; the sequence is MTNDTWNEVR…RQLSAHGAGA (71 aa). The domain II stretch occupies residues 71-133; that stretch reads ADRVKFTVSP…PAQPRELPGA (63 aa). The span at 107 to 127 shows a compositional bias: low complexity; that stretch reads APAPVHHTAPAPAPVAAPAQP. Residues 107-129 are disordered; it reads APAPVHHTAPAPAPVAAPAQPRE. Residues 134 to 355 are domain III, AAA+ region; it reads KLNPNFTFAN…GALTRLFAFA (222 aa). Gly178, Gly180, Lys181, and Thr182 together coordinate ATP. The tract at residues 356-475 is domain IV, binds dsDNA; the sequence is DLVRREVTVD…AELLRRTLEA (120 aa).

It belongs to the DnaA family. In terms of assembly, oligomerizes as a right-handed, spiral filament on DNA at oriC.

It localises to the cytoplasm. In terms of biological role, plays an essential role in the initiation and regulation of chromosomal replication. ATP-DnaA binds to the origin of replication (oriC) to initiate formation of the DNA replication initiation complex once per cell cycle. Binds the DnaA box (a 9 base pair repeat at the origin) and separates the double-stranded (ds)DNA. Forms a right-handed helical filament on oriC DNA; dsDNA binds to the exterior of the filament while single-stranded (ss)DNA is stabiized in the filament's interior. The ATP-DnaA-oriC complex binds and stabilizes one strand of the AT-rich DNA unwinding element (DUE), permitting loading of DNA polymerase. After initiation quickly degrades to an ADP-DnaA complex that is not apt for DNA replication. Binds acidic phospholipids. This is Chromosomal replication initiator protein DnaA from Jannaschia sp. (strain CCS1).